The sequence spans 7078 residues: Replicase polyprotein 1ab (7078 aa).

The region spanning 25–149 (HQDHVSLTVP…KQNILLRKYG (125 aa)) is the CoV Nsp1 globular domain. Residues 165–193 (TSCPEWMDDFEADPKGKYAQNLLKKLIGG) form the BetaCoV Nsp1 C-terminal domain. A CoV Nsp2 N-terminal domain is found at 195 to 475 (VTPVDQYMCG…WNKVTQIANM (281 aa)). Zn(2+) contacts are provided by Cys338, Cys341, Cys357, Cys359, Cys383, Cys386, His400, and Cys436. The segment at 338-359 (CGSCGNDSWLTGNAIQGFACGC) is C4. A C2HC region spans residues 383–436 (CATCPFAKGDSCSSNCKHSVAQLVSYLSERCNVIADSKSFTLIFGGVAYAYFGC). The CoV Nsp2 middle domain maps to 481-715 (QHSLNFVGEF…LDLLNKGMQL (235 aa)). The CoV Nsp2 C-terminal domain occupies 717–853 (HTKVSWAGSN…VPTLFRLKGG (137 aa)). The region spanning 857-966 (KKVAFGGDQV…MIFSLHPVEC (110 aa)) is the Ubiquitin-like 1 domain. Macro domains lie at 1110 to 1276 (PLSN…IVDI) and 1278 to 1404 (QSLT…VKLN). The DPUP domain occupies 1404 to 1477 (NPSEDFIKHV…LSACRAYLDS (74 aa)). In terms of domain architecture, Ubiquitin-like 2 spans 1482-1537 (QLTIEVLVTVDGVNFRTVVLNNKNTYRSQLGCVFFNGADISDTIPDEKQNGHSLYL). The Peptidase C16 domain maps to 1552-1823 (LYGPVDPTFL…RTEVDPDLSA (272 aa)). Cys1592 (for PL-PRO activity) is an active-site residue. The Zn(2+) site is built by Cys1672, Cys1675, Cys1707, and Cys1709. Residues 1672-1709 (CNVCGIKDVVLQGLKACCYVGVQTVEDLRARMTYVCQC) form a C4-type zinc finger. Active-site for PL-PRO activity residues include His1759 and Asp1774. The Nucleic acid-binding domain maps to 1837–1954 (PVTYSPATIL…QIFDVAPIEL (118 aa)). In terms of domain architecture, G2M spans 1967 to 2088 (PVEPPTVDVV…ATRTFTATTA (122 aa)). The segment at 2040–2363 (SMLRLHTVES…NLLACLWLLR (324 aa)) is HD1. 2 helical membrane passes run 2105-2125 (GILTGCFSFVKMLFMLPLAYF) and 2177-2197 (LLLMLCTTMVLLSSVYHLYVF). The 3Ecto domain maps to 2214-2280 (KKFYKEVRAY…LKMVQTHLSH (67 aa)). 2 disulfide bridges follow: Cys2230–Cys2258 and Cys2248–Cys2255. Transmembrane regions (helical) follow at residues 2281 to 2301 (YVLNIDWLWFAFETGLAYMLY), 2305 to 2325 (FNWLLLAGTLHYFFAQTSIFV), and 2330 to 2350 (YNYAVSSAFWLFTHIPMAGLV). The Y1 stretch occupies residues 2364-2454 (KFYQHVINGC…ALRRPINATD (91 aa)). One can recognise a CoV Nsp3 Y domain in the interval 2364–2737 (KFYQHVINGC…LSVRFTANKI (374 aa)). Zn(2+) contacts are provided by His2368, Cys2373, Cys2378, Cys2381, Cys2414, His2417, Cys2421, and Cys2424. A ZF1 region spans residues 2368–2381 (HVINGCKDTACLLC). A ZF2 region spans residues 2414 to 2424 (CRRHNWNCVDC). The Y2 stretch occupies residues 2455-2553 (RSHYYVDSVT…LVDSSLVTSV (99 aa)). The tract at residues 2455–2737 (RSHYYVDSVT…LSVRFTANKI (283 aa)) is coV-Y. The segment at 2554–2636 (GDSSEIATKM…DSVQYAHKHD (83 aa)) is Y3. The segment at 2637–2737 (IQITNESYNN…LSVRFTANKI (101 aa)) is Y4. Helical transmembrane passes span 2757-2777 (VLATIIVFLCAVLMYLCLPTF), 3028-3048 (TTSLVLGIGLCAFLTLLFYYI), 3062-3082 (AVIAVVAAVLNSLCICFVASI), 3104-3124 (PAFIMHVSWYIMFGPIVPIWM), and 3125-3145 (TCVYTVAMCFRHFFWVLAYFS). Residues 2761-3171 (IIVFLCAVLM…QDAASNIFVI (411 aa)) form an HD2 region. The 97-residue stretch at 3151-3247 (VFTDGKLNCS…NCSITSGVLQ (97 aa)) folds into the Nsp4C domain. The 306-residue stretch at 3248–3553 (SGLVKMSHPS…NMQIMGVVMQ (306 aa)) folds into the Peptidase C30 domain. Catalysis depends on for 3CL-PRO activity residues His3288 and Cys3395. A run of 7 helical transmembrane segments spans residues 3559–3579 (VTYGTAHWLFATLVSTYVIIL), 3593–3613 (TIPTQLFPLLFVTMAFVMLLV), 3618–3638 (TFLTLFLLPVAICLTYANIVY), 3664–3684 (TTHTDIGVYISMSLVLVIVVK), 3691–3711 (LSNFALALCSGVMWLYTYSIG), 3740–3760 (LAKVCTYAIFAYSPQLTLVFP), and 3765–3785 (ILLLYTCLGFMCTCYFGVFSL). Positions 3571 to 3785 (LVSTYVIILQ…CTCYFGVFSL (215 aa)) are HD3. Residues 3846 to 3928 (SKLTDLKCTS…DIFDTPSVLQ (83 aa)) enclose the RdRp Nsp7 cofactor domain. One can recognise a RdRp Nsp8 cofactor domain in the interval 3929–4127 (ATLSEFSHLA…RASTSAVKLQ (199 aa)). The region spanning 4128-4237 (NNEIKPSGLK…GHIAATVRLQ (110 aa)) is the Nsp9 ssRNA-binding domain. In terms of domain architecture, ExoN/MTase coactivator spans 4238–4377 (AGSNTEFASN…DSLRQAALPQ (140 aa)). Positions 4311, 4314, 4320, 4327, 4354, 4357, 4365, and 4367 each coordinate Zn(2+). 2 zinc fingers span residues 4311–4327 (CLYCRAHIEHPDVSGVC) and 4354–4367 (CNVCQYWIGYGCNC). The region spanning 4383–4639 (FLKRVRGSIV…AAETHRDCDF (257 aa)) is the NiRAN domain. Mn(2+) is bound by residues Asn4587 and Asp4596. The Nsp12 Interface domain occupies 4644–4742 (IEWPLTEYDF…MNMDVSLHRH (99 aa)). Residues His4673, Cys4679, Cys4684, Cys4688, and Cys4865 each coordinate Zn(2+). One can recognise a Nsp12 RNA-dependent RNA polymerase domain in the interval 4743–5310 (RLSLKELMMY…DLYSSPTTLQ (568 aa)). The segment at 4745–4959 (SLKELMMYAA…HQKMLKSMAA (215 aa)) is rdRp Fingers N-ter. A rdRp Palm N-ter region spans residues 4960–4998 (TRGATCVIGTTKFYGGWDFMLKTLYKDVDNPHLMGWDYP). The RdRp catalytic domain maps to 4990 to 5152 (PHLMGWDYPK…CYNSDYAAKG (163 aa)). The rdRp Fingers C-ter stretch occupies residues 4999–5057 (KCDRAMPNMCRIFASLILARKHGTCCTTRDRFYRLANECAQVLSEYVLCGGGYYVKPGG). The Zn(2+) site is built by His5020, Cys5023, and Cys5024. The segment at 5058 to 5193 (TSSGDATTAY…KKGPHEFCSQ (136 aa)) is rdRp Palm C-ter. Catalysis depends on residues Ser5137, Asp5138, and Asp5139. The interval 5194-5310 (HTLYIKDGDD…DLYSSPTTLQ (117 aa)) is rdRp Thumb. The CV ZBD domain occupies 5311–5423 (AVGSCVVCHS…VEFNRLATCD (113 aa)). Zn(2+)-binding residues include Cys5315, Cys5318, Cys5326, Cys5329, Cys5336, Cys5339, His5343, His5349, Cys5360, Cys5365, Cys5382, and His5385. ATP is bound at residue 5592 to 5599 (GPPGTGKS). In terms of domain architecture, ExoN spans 5980 to 6195 (LFITREEAVR…RCLAIHSCFI (216 aa)). Residues Asp5998, Glu6000, and Glu6099 contribute to the active site. Cys6115, Cys6118, Cys6134, His6137, His6165, Cys6169, and His6172 together coordinate Zn(2+). Catalysis depends on residues His6176 and Asp6181. Residue Cys6187 participates in Zn(2+) binding. One can recognise an N7-MTase domain in the interval 6204-6432 (YPYISHEKKL…NLWSTFTKVQ (229 aa)). An S-adenosyl-L-methionine-binding site is contributed by 6239 to 6245 (DIGNPKG). The tract at residues 6318-6332 (CDGGSLYVNKHAFHT) is gpppA-binding. The Zn(2+) site is built by Cys6356, Cys6378, Cys6389, and His6392. The Nsp15 N-terminal oligomerization domain maps to 6433–6493 (GLENIAFNFV…NIAFELYAKR (61 aa)). An AV-Nsp11N/CoV-Nsp15M domain is found at 6494–6616 (AVRSHPDFKL…LYKKVNNEFI (123 aa)). In terms of domain architecture, NendoU spans 6633 to 6772 (LPLSDMEKDF…KDGQVQTFYP (140 aa)). Residues His6663, His6678, Lys6718, Lys6821, Asp6905, Lys6945, and Glu6978 contribute to the active site. One can recognise a Nidovirus-type SAM-dependent 2'-O-MTase domain in the interval 6777-7071 (SADWKPGHAM…TLSVSTDVLV (295 aa)).

This sequence belongs to the coronaviruses polyprotein 1ab family. Interacts with host PHB and PHB2. In terms of assembly, interacts with papain-like protease nsp3 and non-structural protein 6. As to quaternary structure, monomer. Homodimer. Only the homodimer shows catalytic activity. Interacts with nsp8 and nsp12 to form the replication-transcription complex (RTC): nsp12, nsp7, two subunits of nsp8, and up to two subunits of nsp13. In terms of assembly, interacts with nsp7, nsp13 and nsp12 to form the replication-transcription complex (RTC): nsp12, nsp7, two subunits of nsp8, and up to two subunits of nsp13. As to quaternary structure, interacts with nsp12. Interacts with proofreading exoribonuclease nsp14 and 2'-O-methyltransferase nsp16; these interactions enhance nsp14 and nsp16 enzymatic activities. In terms of assembly, interacts with nsp7 and nsp8 to form the replication-transcription complex (RTC): nsp12, nsp7, two subunits of nsp8, and up to two subunits of nsp13. Interacts with nsp9. As to quaternary structure, interacts with nsp8 to form the replication-transcription complex (RTC): nsp12, nsp7, two subunits of nsp8, and up to two subunits of nsp13. It depends on Mn(2+) as a cofactor. Mg(2+) serves as cofactor. Specific enzymatic cleavages in vivo by its own proteases yield mature proteins. 3CL-PRO and PL-PRO proteinases are autocatalytically processed.

Its subcellular location is the host membrane. The protein resides in the host cytoplasm. It is found in the host perinuclear region. The protein localises to the host endoplasmic reticulum-Golgi intermediate compartment. It catalyses the reaction RNA(n) + a ribonucleoside 5'-triphosphate = RNA(n+1) + diphosphate. The catalysed reaction is ATP + H2O = ADP + phosphate + H(+). The enzyme catalyses Thiol-dependent hydrolysis of ester, thioester, amide, peptide and isopeptide bonds formed by the C-terminal Gly of ubiquitin (a 76-residue protein attached to proteins as an intracellular targeting signal).. It carries out the reaction a 5'-end (N(7)-methyl 5'-triphosphoguanosine)-ribonucleoside in mRNA + S-adenosyl-L-methionine = a 5'-end (N(7)-methyl 5'-triphosphoguanosine)-(2'-O-methyl-ribonucleoside) in mRNA + S-adenosyl-L-homocysteine + H(+). It catalyses the reaction uridylyl-uridylyl-ribonucleotide-RNA = a 3'-end uridylyl-2',3'-cyclophospho-uridine-RNA + a 5'-end dephospho-ribonucleoside-RNA. The catalysed reaction is a 5'-end diphospho-ribonucleoside in mRNA + GTP + H(+) = a 5'-end (5'-triphosphoguanosine)-ribonucleoside in mRNA + diphosphate. The enzyme catalyses a 5'-end (5'-triphosphoguanosine)-ribonucleoside in mRNA + S-adenosyl-L-methionine = a 5'-end (N(7)-methyl 5'-triphosphoguanosine)-ribonucleoside in mRNA + S-adenosyl-L-homocysteine. In terms of biological role, the replicase polyprotein of coronaviruses is a multifunctional protein: it contains the activities necessary for the transcription of negative stranded RNA, leader RNA, subgenomic mRNAs and progeny virion RNA as well as proteinases responsible for the cleavage of the polyprotein into functional products. Its function is as follows. Promotes the degradation of host mRNAs by inducing an endonucleolytic RNA cleavage in template mRNAs, and inhibits of host mRNA translation, a function that is separable from its RNA cleavage activity. By suppressing host gene expression, nsp1 facilitates efficient viral gene expression in infected cells and evasion from host immune response. May play a role in the modulation of host cell survival signaling pathway by interacting with host PHB and PHB2. Indeed, these two proteins play a role in maintaining the functional integrity of the mitochondria and protecting cells from various stresses. Functionally, responsible for the cleavages located at the N-terminus of the replicase polyprotein. In addition, PL-PRO possesses a deubiquitinating/deISGylating activity and processes both 'Lys-48'- and 'Lys-63'-linked polyubiquitin chains from cellular substrates. Participates, together with nsp4, in the assembly of virally induced cytoplasmic double-membrane vesicles necessary for viral replication. Antagonizes innate immune induction of type I interferon by blocking the phosphorylation, dimerization and subsequent nuclear translocation of host IRF3. Also prevents host NF-kappa-B. signaling. In terms of biological role, participates in the assembly of virally-induced cytoplasmic double-membrane vesicles necessary for viral replication. Its function is as follows. Cleaves the C-terminus of replicase polyprotein at 11 sites. Recognizes substrates containing the core sequence [ILMVF]-Q-|-[SGACN]. May cleave human NLRP1 in lung epithelial cells, thereby activating the NLRP1 inflammasome pathway. Also able to bind an ADP-ribose-1''-phosphate (ADRP). Plays a role in the initial induction of autophagosomes from host endoplasmic reticulum. Later, limits the expansion of these phagosomes that are no longer able to deliver viral components to lysosomes. Functionally, forms a hexadecamer with nsp8 (8 subunits of each) that may participate in viral replication by acting as a primase. Alternatively, may synthesize substantially longer products than oligonucleotide primers. In terms of biological role, forms a hexadecamer with nsp7 (8 subunits of each) that may participate in viral replication by acting as a primase. Alternatively, may synthesize substantially longer products than oligonucleotide primers. Its function is as follows. Forms a primer, NSP9-pU, which is utilized by the polymerase for the initiation of RNA chains. Interacts with ribosome signal recognition particle RNA (SRP). Together with NSP8, suppress protein integration into the cell membrane, thereby disrupting host immune defenses. Plays a pivotal role in viral transcription by stimulating both nsp14 3'-5' exoribonuclease and nsp16 2'-O-methyltransferase activities. Therefore plays an essential role in viral mRNAs cap methylation. Functionally, RNA-directed RNA polymerase that catalyzes the transcription of viral genomic and subgenomic RNAs. Acts in complex with nsp7 and nsp8 to transcribe both the minus and positive strands of genomic RNA. The kinase-like NiRAN domain of NSP12 attaches one or more nucleotides to the amino terminus of NSP9, forming a covalent RNA-protein intermediate that serves as transcription/replication primer. Subgenomic RNAs (sgRNAs) are formed by discontinuous transcription: The polymerase has the ability to pause at transcription-regulating sequences (TRS) and jump to the leader TRS, resulting in a major deletion. This creates a series of subgenomic RNAs that are replicated, transcribed and translated. In addition, Nsp12 is a subunit of the viral RNA capping enzyme that catalyzes the RNA guanylyltransferase reaction for genomic and sub-genomic RNAs. Subsequently, the NiRAN domain transfers RNA to GDP, and forms the core cap structure GpppA-RNA. In terms of biological role, multi-functional protein with a zinc-binding domain in N-terminus displaying RNA and DNA duplex-unwinding activities with 5' to 3' polarity. Activity of helicase is dependent on magnesium. Its function is as follows. Plays a role in viral RNA synthesis through two distinct activities: an N7-guanine methyltransferase activity involved in the formation of the cap structure GpppA-RNA; a proofreading exoribonuclease for RNA replication that reduces the sensitivity of the virus to RNA mutagens. This activity acts on both ssRNA and dsRNA in a 3'-5' direction. Plays a role in viral transcription/replication and prevents the simultaneous activation of host cell dsRNA sensors, such as MDA5/IFIH1, OAS, and PKR. Acts by degrading the 5'-polyuridines generated during replication of the poly(A) region of viral genomic and subgenomic RNAs. Catalyzes a two-step reaction in which a 2'3'-cyclic phosphate (2'3'-cP) is first generated by 2'-O transesterification, which is then hydrolyzed to a 3'-phosphate (3'-P). If not degraded, poly(U) RNA would hybridize with poly(A) RNA tails and activate host dsRNA sensors. Functionally, methyltransferase that mediates mRNA cap 2'-O-ribose methylation to the 5'-cap structure of viral mRNAs. N7-methyl guanosine cap is a prerequisite for binding of nsp16. Therefore plays an essential role in viral mRNAs cap methylation which is essential to evade immune system. In Camelus dromedarius (Dromedary), this protein is Replicase polyprotein 1ab (rep).